The chain runs to 201 residues: 3-isopropylmalate dehydratase small subunit (201 aa).

It belongs to the LeuD family. LeuD type 1 subfamily. Heterodimer of LeuC and LeuD.

The enzyme catalyses (2R,3S)-3-isopropylmalate = (2S)-2-isopropylmalate. Its pathway is amino-acid biosynthesis; L-leucine biosynthesis; L-leucine from 3-methyl-2-oxobutanoate: step 2/4. In terms of biological role, catalyzes the isomerization between 2-isopropylmalate and 3-isopropylmalate, via the formation of 2-isopropylmaleate. The protein is 3-isopropylmalate dehydratase small subunit of Shigella flexneri serotype 5b (strain 8401).